The primary structure comprises 202 residues: Translation initiation factor IF-3 (202 aa).

The protein belongs to the IF-3 family. Monomer.

Its subcellular location is the cytoplasm. IF-3 binds to the 30S ribosomal subunit and shifts the equilibrium between 70S ribosomes and their 50S and 30S subunits in favor of the free subunits, thus enhancing the availability of 30S subunits on which protein synthesis initiation begins. This is Translation initiation factor IF-3 from Prochlorococcus marinus (strain NATL2A).